A 270-amino-acid polypeptide reads, in one-letter code: Splicing factor YJU2 (270 aa).

Positions Met-1 to Asn-32 are disordered. 4 residues coordinate Zn(2+): Cys-48, Cys-51, Cys-84, and Cys-87. A disordered region spans residues Pro-251–Val-270. The segment covering Tyr-258 to Val-270 has biased composition (basic residues).

It belongs to the CWC16 family. YJU2 subfamily. In terms of assembly, component of the spliceosome. Present in the activated B complex, the catalytically activated B* complex which catalyzes the branching, the catalytic step 1 C complex catalyzing the exon ligation, and the postcatalytic P complex containing the ligated exons (mRNA) and the excised lariat intron. Belongs to the 40S cdc5-associated complex (or cwf complex), a spliceosome sub-complex reminiscent of a late-stage spliceosome composed of the U2, U5 and U6 snRNAs and at least brr2, cdc5, cwf2/prp3, cwf3/syf1, cwf4/syf3, cwf5/ecm2, spp42/cwf6, cwf7/spf27, cwf8, cwf9, cwf10, cwf11, cwf12, prp45/cwf13, cwf14, cwf15, cwf16, cwf17, cwf18, cwf19, cwf20, cwf21, cwf22, cwf23, cwf24, cwf25, cwf26, cyp7/cwf27, cwf28, cwf29/ist3, lea1, msl1, prp5/cwf1, prp10, prp12/sap130, prp17, prp22, sap61, sap62, sap114, sap145, slu7, smb1, smd1, smd3, smf1, smg1 and syf2.

It is found in the nucleus. In terms of biological role, part of the spliceosome which catalyzes two sequential transesterification reactions, first the excision of the non-coding intron from pre-mRNA and then the ligation of the coding exons to form the mature mRNA. Plays a role in stabilizing the structure of the spliceosome catalytic core and docking of the branch helix into the active site, producing 5'-exon and lariat intron-3'-intermediates. In Schizosaccharomyces pombe (strain 972 / ATCC 24843) (Fission yeast), this protein is Splicing factor YJU2 (cwf16).